Reading from the N-terminus, the 230-residue chain is Leucyl/phenylalanyl-tRNA--protein transferase (230 aa).

This sequence belongs to the L/F-transferase family.

The protein resides in the cytoplasm. The enzyme catalyses N-terminal L-lysyl-[protein] + L-leucyl-tRNA(Leu) = N-terminal L-leucyl-L-lysyl-[protein] + tRNA(Leu) + H(+). The catalysed reaction is N-terminal L-arginyl-[protein] + L-leucyl-tRNA(Leu) = N-terminal L-leucyl-L-arginyl-[protein] + tRNA(Leu) + H(+). It catalyses the reaction L-phenylalanyl-tRNA(Phe) + an N-terminal L-alpha-aminoacyl-[protein] = an N-terminal L-phenylalanyl-L-alpha-aminoacyl-[protein] + tRNA(Phe). Its function is as follows. Functions in the N-end rule pathway of protein degradation where it conjugates Leu, Phe and, less efficiently, Met from aminoacyl-tRNAs to the N-termini of proteins containing an N-terminal arginine or lysine. This chain is Leucyl/phenylalanyl-tRNA--protein transferase, found in Erwinia tasmaniensis (strain DSM 17950 / CFBP 7177 / CIP 109463 / NCPPB 4357 / Et1/99).